A 470-amino-acid chain; its full sequence is Zinc finger protein pat-9 (470 aa).

A disordered region spans residues 1–25 (MENRTPMQHHSGYEIVKSEPPSTPK). 3 C2H2-type zinc fingers span residues 84–106 (YPCNLCSSKFGSKMELEEHQNSH), 112–134 (FECDTCNARFNRRSTLWNHKRIH), and 140–162 (FVCTVCQMTFKWKNSLKCHKDMH). The segment at 191–235 (MEQEENGGLPASSSASSVISHPLITTTSGNKKRSKAAKAKQTPSS) is disordered. Positions 221-230 (KKRSKAAKAK) match the Nuclear localization signal motif.

This sequence belongs to the krueppel C2H2-type zinc-finger protein family. In terms of tissue distribution, expressed in body wall muscle and gonad (at protein level).

It localises to the nucleus. The protein resides in the chromosome. Probable transcription factor; required for proper organization of muscle myofilaments and for their recruitment to the M line. The sequence is that of Zinc finger protein pat-9 from Caenorhabditis elegans.